The chain runs to 248 residues: Peptidyl-tRNA hydrolase (248 aa).

Tyrosine 14 lines the tRNA pocket. Residue histidine 19 is the Proton acceptor of the active site. Positions 64, 66, and 112 each coordinate tRNA. Residues 190-248 (PRSSTGEASKGRKKAQKSEPGVAKTPAKAATPEAPAAGDIPAAPEDSRSPMQKLLDKFK) form a disordered region. The span at 212–226 (AKTPAKAATPEAPAA) shows a compositional bias: low complexity.

It belongs to the PTH family. In terms of assembly, monomer.

It is found in the cytoplasm. It catalyses the reaction an N-acyl-L-alpha-aminoacyl-tRNA + H2O = an N-acyl-L-amino acid + a tRNA + H(+). Hydrolyzes ribosome-free peptidyl-tRNAs (with 1 or more amino acids incorporated), which drop off the ribosome during protein synthesis, or as a result of ribosome stalling. Functionally, catalyzes the release of premature peptidyl moieties from peptidyl-tRNA molecules trapped in stalled 50S ribosomal subunits, and thus maintains levels of free tRNAs and 50S ribosomes. This is Peptidyl-tRNA hydrolase from Ruegeria sp. (strain TM1040) (Silicibacter sp.).